We begin with the raw amino-acid sequence, 361 residues long: Chorismate synthase (361 aa).

Positions 37–59 (TEEDLQHDLDRRRPGTSRYTTPR) are disordered. The span at 40-49 (DLQHDLDRRR) shows a compositional bias: basic and acidic residues. R48 and R54 together coordinate NADP(+). Residues 125-127 (RSS), 238-239 (NA), G278, 293-297 (KPTSS), and R319 contribute to the FMN site.

This sequence belongs to the chorismate synthase family. In terms of assembly, homotetramer. FMNH2 is required as a cofactor.

The enzyme catalyses 5-O-(1-carboxyvinyl)-3-phosphoshikimate = chorismate + phosphate. The protein operates within metabolic intermediate biosynthesis; chorismate biosynthesis; chorismate from D-erythrose 4-phosphate and phosphoenolpyruvate: step 7/7. Its function is as follows. Catalyzes the anti-1,4-elimination of the C-3 phosphate and the C-6 proR hydrogen from 5-enolpyruvylshikimate-3-phosphate (EPSP) to yield chorismate, which is the branch point compound that serves as the starting substrate for the three terminal pathways of aromatic amino acid biosynthesis. This reaction introduces a second double bond into the aromatic ring system. The chain is Chorismate synthase from Erwinia tasmaniensis (strain DSM 17950 / CFBP 7177 / CIP 109463 / NCPPB 4357 / Et1/99).